A 562-amino-acid polypeptide reads, in one-letter code: Glutamine--tRNA ligase (562 aa).

The 'HIGH' region signature appears at Pro-35–His-45. ATP contacts are provided by residues Glu-36–Asn-38 and His-42–Ser-48. Asp-68 and Tyr-213 together coordinate L-glutamine. ATP-binding positions include Thr-232 and Arg-264 to Leu-265. Positions Ile-271–Arg-275 match the 'KMSKS' region motif.

This sequence belongs to the class-I aminoacyl-tRNA synthetase family. As to quaternary structure, monomer.

Its subcellular location is the cytoplasm. It carries out the reaction tRNA(Gln) + L-glutamine + ATP = L-glutaminyl-tRNA(Gln) + AMP + diphosphate. This chain is Glutamine--tRNA ligase, found in Neisseria gonorrhoeae (strain ATCC 700825 / FA 1090).